Here is a 289-residue protein sequence, read N- to C-terminus: Serine/threonine-protein phosphatase Pgam5, mitochondrial (289 aa).

A helical membrane pass occupies residues 7 to 23; it reads FACGTGAGLAAYYLQRL.

The protein belongs to the phosphoglycerate mutase family. BPG-dependent PGAM subfamily. As to quaternary structure, interacts with Pk92B/ASK1.

The protein localises to the mitochondrion outer membrane. The enzyme catalyses O-phospho-L-seryl-[protein] + H2O = L-seryl-[protein] + phosphate. It catalyses the reaction O-phospho-L-threonyl-[protein] + H2O = L-threonyl-[protein] + phosphate. Functionally, displays phosphatase activity for serine/threonine residues, and dephosphorylates and activates Pk92B kinase. Has apparently no phosphoglycerate mutase activity. The chain is Serine/threonine-protein phosphatase Pgam5, mitochondrial from Drosophila simulans (Fruit fly).